We begin with the raw amino-acid sequence, 229 residues long: NAD-dependent protein deacetylase (229 aa).

Residues 1–229 (MNKLNEALKK…SDAVKVFAEI (229 aa)) form the Deacetylase sirtuin-type domain. NAD(+)-binding residues include Ala20, Arg32, Gln96, Ile98, Asp99, His114, Thr181, Ser182, Asn205, and Val223. Nicotinamide-binding residues include Ile98 and Asp99. Catalysis depends on His114, which acts as the Proton acceptor.

The protein belongs to the sirtuin family. Class U subfamily.

It localises to the cytoplasm. It carries out the reaction N(6)-acetyl-L-lysyl-[protein] + NAD(+) + H2O = 2''-O-acetyl-ADP-D-ribose + nicotinamide + L-lysyl-[protein]. Functionally, NAD-dependent protein deacetylase which modulates the activities of several enzymes which are inactive in their acetylated form. This Listeria monocytogenes serotype 4b (strain F2365) protein is NAD-dependent protein deacetylase.